A 545-amino-acid chain; its full sequence is MAKEIIFSDEARNKLYEGVKKLNDAVKVTMGPRGRNVLIQKSFGAPSITKDGVSVAKEVELKDSLENMGASLVREVASKTADQAGDGTTTATVLAHAIFKEGLRNITAGANPIEVKRGMDKACEAIVAELKKLSREVKDKKEIAQVATISANSDEKIGNLIADAMEKVGKDGVITVEEAKSINDELNVVEGMQFDRGYLSPYFITNAEKMTVELSSPYILLFDKKIANLKDLLPVLEQIQKTGKPLLIIAEDIEGEALATLVVNKLRGVLNISAVKAPGFGDRRKAMLEDIAILTGGEVISEELGRTLESATIQDLGQASSVIIDKDNTTIVNGAGEKANIDARVNQIKAQIAETTSDYDREKLQERLAKLSGGVAVIKVGAATETEMKEKKDRVDDALSATKAAVEEGIVIGGGAALIKAKAKIKLDLQGDEAIGAAIVERALRAPLRQIAENAGFDAGVVVNSVENAKDENTGFDAAKGEYVNMLESGIIDPVKVERVALLNAVSVASMLLTTEATISEIKEDKPTMPDMSGMGGMGGMGGMM.

ATP is bound by residues 29 to 32, Lys-50, 86 to 90, Gly-414, 477 to 479, and Asp-493; these read TMGP, DGTTT, and DAA.

This sequence belongs to the chaperonin (HSP60) family. In terms of assembly, forms a cylinder of 14 subunits composed of two heptameric rings stacked back-to-back. Interacts with the co-chaperonin GroES.

It is found in the cytoplasm. It carries out the reaction ATP + H2O + a folded polypeptide = ADP + phosphate + an unfolded polypeptide.. In terms of biological role, together with its co-chaperonin GroES, plays an essential role in assisting protein folding. The GroEL-GroES system forms a nano-cage that allows encapsulation of the non-native substrate proteins and provides a physical environment optimized to promote and accelerate protein folding. The protein is Chaperonin GroEL of Campylobacter jejuni (strain RM1221).